We begin with the raw amino-acid sequence, 101 residues long: Small ribosomal subunit protein uS14 (101 aa).

Belongs to the universal ribosomal protein uS14 family. In terms of assembly, part of the 30S ribosomal subunit. Contacts proteins S3 and S10.

Its function is as follows. Binds 16S rRNA, required for the assembly of 30S particles and may also be responsible for determining the conformation of the 16S rRNA at the A site. The protein is Small ribosomal subunit protein uS14 of Nitrosomonas europaea (strain ATCC 19718 / CIP 103999 / KCTC 2705 / NBRC 14298).